We begin with the raw amino-acid sequence, 65 residues long: Photosystem II reaction center protein J (65 aa).

A compositionally biased stretch (basic and acidic residues) spans 1–18 (MSSKLKGPDGRLPDRLPD). The segment at 1 to 21 (MSSKLKGPDGRLPDRLPDGRP) is disordered. The helical transmembrane segment at 36-56 (LWLVATAGGIAVIFVLGIFFY) threads the bilayer.

The protein belongs to the PsbJ family. PSII is composed of 1 copy each of membrane proteins PsbA, PsbB, PsbC, PsbD, PsbE, PsbF, PsbH, PsbI, PsbJ, PsbK, PsbL, PsbM, PsbT, PsbX, PsbY, Psb30/Ycf12, peripheral proteins PsbO, CyanoQ (PsbQ), PsbU, PsbV and a large number of cofactors. It forms dimeric complexes.

It is found in the cellular thylakoid membrane. Its function is as follows. One of the components of the core complex of photosystem II (PSII). PSII is a light-driven water:plastoquinone oxidoreductase that uses light energy to abstract electrons from H(2)O, generating O(2) and a proton gradient subsequently used for ATP formation. It consists of a core antenna complex that captures photons, and an electron transfer chain that converts photonic excitation into a charge separation. The chain is Photosystem II reaction center protein J from Prochlorococcus marinus (strain SARG / CCMP1375 / SS120).